Here is a 367-residue protein sequence, read N- to C-terminus: RYamide receptor (367 aa).

The Extracellular segment spans residues 1-35; the sequence is MDANTTRNESFSLDCELVNPNSTLANVYFLSAVYS. Asn-4, Asn-8, and Asn-21 each carry an N-linked (GlcNAc...) asparagine glycan. Residues 36–56 traverse the membrane as a helical segment; it reads MYAIIFVVALIGNSFVCYIVL. The Cytoplasmic portion of the chain corresponds to 57-66; that stretch reads SSPPMRTVTN. A helical transmembrane segment spans residues 67 to 87; sequence FFILNLAIGDVLITLLCVPFT. At 88–113 the chain is on the extracellular side; the sequence is SVSLLMQYWPFGGILCPVVNYSQALS. N-linked (GlcNAc...) asparagine glycosylation is present at Asn-107. A helical membrane pass occupies residues 114–134; that stretch reads VFVSAYTLVAISIDKYMIIMW. Topologically, residues 135–143 are cytoplasmic; it reads PLKPRISKR. Residues 144 to 164 form a helical membrane-spanning segment; that stretch reads FATYIIALVWLIAGITVLPSA. At 165-212 the chain is on the extracellular side; sequence TFTTLINDENILGTSAYEQCDKYICAEEYSKVGQEYGDLYTKVLMFLQ. The chain crosses the membrane as a helical span at residues 213–233; sequence YVIPSLVLLFTYTSIGVVIWC. Topologically, residues 234 to 258 are cytoplasmic; it reads HRIPGEAENSRDQRIAKNKTKMIKM. A helical membrane pass occupies residues 259 to 279; sequence MVTVVCVYTICWLPYNVLMIF. Residues 280 to 282 are Extracellular-facing; it reads KEH. The chain crosses the membrane as a helical span at residues 283 to 303; the sequence is ISGSVMVYLYFPLHGLAMSHA. Topologically, residues 304-367 are cytoplasmic; sequence CYNPIIYCYM…EITRAQPTSA (64 aa).

It belongs to the G-protein coupled receptor 1 family.

Its subcellular location is the cell membrane. Receptor for the neuropeptides RYamide-1 and RYamide-2. The activity of this receptor is mediated by G proteins which activate a phosphatidyl-inositol-calcium second messenger system. RYamide-2 is the most potent activator. The polypeptide is RYamide receptor (Tribolium castaneum (Red flour beetle)).